The chain runs to 144 residues: Large ribosomal subunit protein uL11 (144 aa).

This sequence belongs to the universal ribosomal protein uL11 family. Part of the ribosomal stalk of the 50S ribosomal subunit. Interacts with L10 and the large rRNA to form the base of the stalk. L10 forms an elongated spine to which L12 dimers bind in a sequential fashion forming a multimeric L10(L12)X complex. Post-translationally, one or more lysine residues are methylated.

In terms of biological role, forms part of the ribosomal stalk which helps the ribosome interact with GTP-bound translation factors. This chain is Large ribosomal subunit protein uL11, found in Parafrankia sp. (strain EAN1pec).